A 196-amino-acid chain; its full sequence is GTP cyclohydrolase 1 (196 aa).

Zn(2+) contacts are provided by cysteine 85, histidine 88, and cysteine 156.

The protein belongs to the GTP cyclohydrolase I family. Toroid-shaped homodecamer, composed of two pentamers of five dimers.

It catalyses the reaction GTP + H2O = 7,8-dihydroneopterin 3'-triphosphate + formate + H(+). It functions in the pathway cofactor biosynthesis; 7,8-dihydroneopterin triphosphate biosynthesis; 7,8-dihydroneopterin triphosphate from GTP: step 1/1. This chain is GTP cyclohydrolase 1, found in Bacteroides thetaiotaomicron (strain ATCC 29148 / DSM 2079 / JCM 5827 / CCUG 10774 / NCTC 10582 / VPI-5482 / E50).